A 299-amino-acid chain; its full sequence is MRKYSQRHIPVMVREVIEFLKPEDEKIILDCTVGEGGHSKAILEHCPGCRIIGIDVDSEVLRIAEEKLKEFSDRASLFKISYREADFLLKTLGVEKVDGILMDLGVSTYQLKGENRGFTFEREEPLDMRMDLESEVTAQKVLNELPEEELARIIFEYGEEKKFARRIARKIVENRPLNTTLDLVKAVREALPSYEIRRRKRHFATKTFQAIRIYVNRELENLKEFLRKAEDLLNPGGRIVVISFHSLEDRIVKETFRNSKKLRILTEKPVRPSEEEIRENPRARSGRLRAAERIEKGGD.

Residues 36 to 38 (GGH), Asp55, Asp103, and Gln110 contribute to the S-adenosyl-L-methionine site. Basic and acidic residues-rich tracts occupy residues 268 to 282 (KPVRPSEEEIRENPR) and 289 to 299 (RAAERIEKGGD). Residues 268–299 (KPVRPSEEEIRENPRARSGRLRAAERIEKGGD) form a disordered region.

The protein belongs to the methyltransferase superfamily. RsmH family.

The protein resides in the cytoplasm. The enzyme catalyses cytidine(1402) in 16S rRNA + S-adenosyl-L-methionine = N(4)-methylcytidine(1402) in 16S rRNA + S-adenosyl-L-homocysteine + H(+). Specifically methylates the N4 position of cytidine in position 1402 (C1402) of 16S rRNA. The chain is Ribosomal RNA small subunit methyltransferase H from Thermotoga petrophila (strain ATCC BAA-488 / DSM 13995 / JCM 10881 / RKU-1).